Consider the following 242-residue polypeptide: Large ribosomal subunit protein uL1 (242 aa).

This sequence belongs to the universal ribosomal protein uL1 family. As to quaternary structure, part of the 50S ribosomal subunit.

Functionally, binds directly to 23S rRNA. The L1 stalk is quite mobile in the ribosome, and is involved in E site tRNA release. Protein L1 is also a translational repressor protein, it controls the translation of the L11 operon by binding to its mRNA. The chain is Large ribosomal subunit protein uL1 from Kitasatospora aureofaciens (Streptomyces aureofaciens).